Reading from the N-terminus, the 316-residue chain is BTB/POZ domain-containing protein Y57A10B.3 (316 aa).

Positions 1–21 (MSAMRRCTCFIICLLTSYTYG) are cleaved as a signal peptide. N91, N107, N118, N133, N191, and N260 each carry an N-linked (GlcNAc...) asparagine glycan. Residues 158-226 (RDAVLIVEGK…VHSTATFPND (69 aa)) enclose the BTB domain.

It is found in the secreted. This Caenorhabditis elegans protein is BTB/POZ domain-containing protein Y57A10B.3 (btb-14).